Here is a 209-residue protein sequence, read N- to C-terminus: NAD-reducing hydrogenase HoxS subunit delta (209 aa).

Tetramer of an alpha and a gamma subunits (flavin-containing dimer), and a delta and a nickel-containing beta subunits (hydrogenase dimer). The cofactor is [4Fe-4S] cluster. It depends on [3Fe-4S] cluster as a cofactor. Requires [2Fe-2S] cluster as cofactor. FMN is required as a cofactor. Ni(2+) serves as cofactor.

It localises to the cytoplasm. It carries out the reaction H2 + NAD(+) = NADH + H(+). This is NAD-reducing hydrogenase HoxS subunit delta (hoxY) from Cupriavidus necator (strain ATCC 17699 / DSM 428 / KCTC 22496 / NCIMB 10442 / H16 / Stanier 337) (Ralstonia eutropha).